The primary structure comprises 349 residues: Ribosomal RNA small subunit methyltransferase H 2 (349 aa).

Residues 80–82 (GGH), D100, F130, D149, and Q156 contribute to the S-adenosyl-L-methionine site.

Belongs to the methyltransferase superfamily. RsmH family.

The protein localises to the cytoplasm. The catalysed reaction is cytidine(1402) in 16S rRNA + S-adenosyl-L-methionine = N(4)-methylcytidine(1402) in 16S rRNA + S-adenosyl-L-homocysteine + H(+). Specifically methylates the N4 position of cytidine in position 1402 (C1402) of 16S rRNA. The polypeptide is Ribosomal RNA small subunit methyltransferase H 2 (Alkaliphilus metalliredigens (strain QYMF)).